The sequence spans 513 residues: Histidine ammonia-lyase (513 aa).

Positions 144-146 (ASG) form a cross-link, 5-imidazolinone (Ala-Gly). At S145 the chain carries 2,3-didehydroalanine (Ser).

It belongs to the PAL/histidase family. In terms of processing, contains an active site 4-methylidene-imidazol-5-one (MIO), which is formed autocatalytically by cyclization and dehydration of residues Ala-Ser-Gly.

Its subcellular location is the cytoplasm. It carries out the reaction L-histidine = trans-urocanate + NH4(+). The protein operates within amino-acid degradation; L-histidine degradation into L-glutamate; N-formimidoyl-L-glutamate from L-histidine: step 1/3. The polypeptide is Histidine ammonia-lyase (Streptococcus pyogenes serotype M1).